Here is a 302-residue protein sequence, read N- to C-terminus: Large ribosomal subunit protein uL4m (302 aa).

This sequence belongs to the universal ribosomal protein uL4 family. As to quaternary structure, component of the mitochondrial ribosome large subunit (39S) which comprises a 16S rRNA and about 50 distinct proteins.

It localises to the mitochondrion. This is Large ribosomal subunit protein uL4m (mrpl4) from Danio rerio (Zebrafish).